The following is an 89-amino-acid chain: UPF0223 protein Bcer98_2663 (89 aa).

It belongs to the UPF0223 family.

In Bacillus cytotoxicus (strain DSM 22905 / CIP 110041 / 391-98 / NVH 391-98), this protein is UPF0223 protein Bcer98_2663.